Here is a 199-residue protein sequence, read N- to C-terminus: dITP/XTP pyrophosphatase (199 aa).

8–13 provides a ligand contact to substrate; sequence TSNINK. D68 functions as the Proton acceptor in the catalytic mechanism. A Mg(2+)-binding site is contributed by D68. Substrate-binding positions include S69, 155–158, K177, and 182–183; these read FGYD and HR.

The protein belongs to the HAM1 NTPase family. In terms of assembly, homodimer. Mg(2+) serves as cofactor.

It catalyses the reaction XTP + H2O = XMP + diphosphate + H(+). It carries out the reaction dITP + H2O = dIMP + diphosphate + H(+). The enzyme catalyses ITP + H2O = IMP + diphosphate + H(+). Its function is as follows. Pyrophosphatase that catalyzes the hydrolysis of nucleoside triphosphates to their monophosphate derivatives, with a high preference for the non-canonical purine nucleotides XTP (xanthosine triphosphate), dITP (deoxyinosine triphosphate) and ITP. Seems to function as a house-cleaning enzyme that removes non-canonical purine nucleotides from the nucleotide pool, thus preventing their incorporation into DNA/RNA and avoiding chromosomal lesions. In Borrelia duttonii (strain Ly), this protein is dITP/XTP pyrophosphatase.